The chain runs to 3491 residues: Erythronolide synthase EryA1 (3491 aa).

Residues 1–484 (MSGPRSRTTS…TPRALAEALA (484 aa)) form a loading domain region. Residues 57-372 (VFVFPGQGAQ…AAQAFTGGVA (316 aa)) form an acyltransferase 1 region. The active-site Acyl-ester intermediate; for acyltransferase 1 activity is serine 145. The disordered stretch occupies residues 386 to 410 (PALCRSSRRPRRKTSRPSPASTGTR). The segment covering 391 to 400 (SSRRPRRKTS) has biased composition (basic residues). The Carrier 1 domain occupies 412–487 (RTCCERLLAV…ALAEALAAGT (76 aa)). An O-(pantetheine 4'-phosphoryl)serine modification is found at serine 447. The 425-residue stretch at 504–928 (GEPVAVVAMA…GTNAHAIIEE (425 aa)) folds into the Ketosynthase family 3 (KS3) 1 domain. Module regions lie at residues 507–1958 (VAVV…AHLA) and 1982–3404 (IAIV…GFLD). Residue cysteine 677 is the Acyl-thioester intermediate; for beta-ketoacyl synthase 1 activity of the active site. Active-site for beta-ketoacyl synthase 1 activity residues include histidine 812 and histidine 850. Residues 1031–1352 (VFVFPGQGWQ…ALSRAFAAGV (322 aa)) are acyltransferase 2. Serine 1128 (acyl-ester intermediate; for acyltransferase 2 activity) is an active-site residue. The tract at residues 1613–1790 (GTVLVTGGTG…ATAVAWGTWA (178 aa)) is beta-ketoacyl reductase 1. NADP(+) is bound by residues 1621–1624 (TGGV), 1644–1647 (SRSG), 1673–1674 (DV), lysine 1723, and 1745–1746 (FS). Tyrosine 1760 acts as the For beta-ketoacyl reductase 1 activity in catalysis. Residues 1886 to 1961 (EALFELVRSH…TLAAHLAAEL (76 aa)) form the Carrier 2 domain. Serine 1921 bears the O-(pantetheine 4'-phosphoryl)serine mark. Residues 1979–2402 (DEPIAIVGMA…GTNAHVIIAE (424 aa)) form the Ketosynthase family 3 (KS3) 2 domain. The active-site Acyl-thioester intermediate; for beta-ketoacyl synthase 2 activity is cysteine 2148. Residues histidine 2283 and histidine 2323 each act as for beta-ketoacyl synthase 2 activity in the active site. Residues 2508–2827 (VFVFPGQGAQ…LADAHTRGVA (320 aa)) are acyltransferase 3. The Acyl-ester intermediate; for acyltransferase 3 activity role is filled by serine 2598. A beta-ketoacyl reductase 2 region spans residues 3057 to 3233 (GTILVTGGTA…ATSVAWGLWA (177 aa)). NADP(+)-binding positions include 3065–3068 (TAGL), 3088–3091 (SRRG), 3117–3118 (DV), lysine 3168, and 3188–3189 (FS). Catalysis depends on tyrosine 3203, which acts as the For beta-ketoacyl reductase 2 activity. One can recognise a Carrier 3 domain in the interval 3329-3407 (ERTAELVRLV…AVAGFLDAEL (79 aa)). Serine 3367 bears the O-(pantetheine 4'-phosphoryl)serine mark. The segment at 3456 to 3491 (QAADASGTGANPSGDDLGEAGVDELLEALGRELDGD) is disordered. A compositionally biased stretch (acidic residues) spans 3471-3481 (DLGEAGVDELL).

In terms of assembly, homodimer. Erythronolide synthase is composed of EryAI, EryAII and EryAIII multimodular (2 modules) polypeptides each coding for a functional synthase subunit which participates in 2 of the six FAS-like elongation steps required for formation of the polyketide. Module 1, 2, 3, 4, 5, and 6 participating in biosynthesis steps 1, 2, 3, 4, 5, and 6, respectively. Pantetheine 4'-phosphate is required as a cofactor.

The catalysed reaction is 6 (S)-methylmalonyl-CoA + propanoyl-CoA + 6 NADPH + 12 H(+) = 6-deoxyerythronolide B + 6 CO2 + 6 NADP(+) + 7 CoA + H2O. It functions in the pathway antibiotic biosynthesis; erythromycin biosynthesis. Involved in the biosynthesis of antibiotic erythromycin via the biosynthesis of its aglycone precursor, 6-deoxyerythronolide B (6-dEB). The protein is Erythronolide synthase EryA1 (eryA) of Saccharopolyspora erythraea (Streptomyces erythraeus).